The sequence spans 588 residues: Ufm1-specific protease (588 aa).

Catalysis depends on residues cysteine 420, aspartate 544, and histidine 546.

The protein belongs to the peptidase C78 family. Interacts with odr-4.

The protein resides in the endoplasmic reticulum membrane. It is found in the cytoplasm. The protein localises to the perinuclear region. In terms of biological role, thiol protease which recognizes and hydrolyzes the peptide bond at the C-terminal Gly of ufm-1, a ubiquitin-like modifier protein bound to a number of target proteins. Required, with oct-4, for the localization of a subset of 7 transmembrane domain odorant receptors, including odr-10, to the cilia of olfactory neurons AWA and AWC. Operates in aggregation behavior, and responses to oxygen levels. The protein is Ufm1-specific protease of Caenorhabditis briggsae.